The sequence spans 299 residues: Acetylglutamate kinase (299 aa).

Residues 66-67 (GG), arginine 88, and asparagine 196 each bind substrate.

Belongs to the acetylglutamate kinase family. ArgB subfamily.

The protein resides in the cytoplasm. It catalyses the reaction N-acetyl-L-glutamate + ATP = N-acetyl-L-glutamyl 5-phosphate + ADP. It participates in amino-acid biosynthesis; L-arginine biosynthesis; N(2)-acetyl-L-ornithine from L-glutamate: step 2/4. Functionally, catalyzes the ATP-dependent phosphorylation of N-acetyl-L-glutamate. This is Acetylglutamate kinase from Alcanivorax borkumensis (strain ATCC 700651 / DSM 11573 / NCIMB 13689 / SK2).